The primary structure comprises 476 residues: Hydrogenase-4 component F homolog (476 aa).

Helical transmembrane passes span 1 to 21, 25 to 45, 54 to 74, 120 to 140, 153 to 173, 202 to 222, 235 to 255, 270 to 290, 307 to 327, 368 to 388, 402 to 422, and 442 to 462; these read MSAAAVILFPFIGILLLSQIS, ISSWLNTLFSFLSFVGSLFLL, FFLVDELNIVFILLTNFIGFT, IGLMWVSIEMATLSTVLMVGI, YFILGGVGIALALFGTFLFYI, LVNIGFIFILIGYGTKVGLFP, PTPISAVLSGLLLNVALYAIL, AGPLLTAMGLASVLFAALMFY, MGIISFAFGIGGALANFAGLL, LGWGLVFGVLAIAGLPPMGVF, SPLLAACLAVGLITALGALIL, and LYLPMFSHFLLVFAAGVYIPP.

This sequence belongs to the complex I subunit 5 family.

Its subcellular location is the cell inner membrane. This is Hydrogenase-4 component F homolog (hyfF) from Methylacidiphilum infernorum (isolate V4) (Methylokorus infernorum (strain V4)).